The following is a 209-amino-acid chain: Uracil phosphoribosyltransferase (209 aa).

5-phospho-alpha-D-ribose 1-diphosphate-binding positions include arginine 79, arginine 104, and 131–139; that span reads DPMLATGVS. Uracil-binding positions include isoleucine 194 and 199–201; that span reads GDA. Aspartate 200 contributes to the 5-phospho-alpha-D-ribose 1-diphosphate binding site.

This sequence belongs to the UPRTase family. Mg(2+) serves as cofactor.

The catalysed reaction is UMP + diphosphate = 5-phospho-alpha-D-ribose 1-diphosphate + uracil. Its pathway is pyrimidine metabolism; UMP biosynthesis via salvage pathway; UMP from uracil: step 1/1. Allosterically activated by GTP. In terms of biological role, catalyzes the conversion of uracil and 5-phospho-alpha-D-ribose 1-diphosphate (PRPP) to UMP and diphosphate. In Thermotoga neapolitana (strain ATCC 49049 / DSM 4359 / NBRC 107923 / NS-E), this protein is Uracil phosphoribosyltransferase.